Reading from the N-terminus, the 158-residue chain is MAGTNPRAARIAALIQRVVASSIERELHDKRLASITVTEVRVTNDLQIAKVYWTQLGHEGHEEGERKRAQQALDQAKGHLRSLVGHKAGLRLTPQLQFVFDEVPGEAHEIEDILAVAKKRDEELARVRATAQYAGDADPYKHDDEAEAEGDEFESDEE.

The tract at residues threonine 130–glutamate 158 is disordered. Positions glutamate 145 to glutamate 158 are enriched in acidic residues.

It belongs to the RbfA family. In terms of assembly, monomer. Binds 30S ribosomal subunits, but not 50S ribosomal subunits or 70S ribosomes.

It is found in the cytoplasm. Its function is as follows. One of several proteins that assist in the late maturation steps of the functional core of the 30S ribosomal subunit. Associates with free 30S ribosomal subunits (but not with 30S subunits that are part of 70S ribosomes or polysomes). Required for efficient processing of 16S rRNA. May interact with the 5'-terminal helix region of 16S rRNA. This chain is Ribosome-binding factor A, found in Bifidobacterium longum subsp. infantis (strain ATCC 15697 / DSM 20088 / JCM 1222 / NCTC 11817 / S12).